The chain runs to 356 residues: Alanine racemase, catabolic (356 aa).

Lys35 acts as the Proton acceptor; specific for D-alanine in catalysis. Lys35 is subject to N6-(pyridoxal phosphate)lysine. Arg130 contacts substrate. The active-site Proton acceptor; specific for L-alanine is the Tyr253. Residue Met301 coordinates substrate.

It belongs to the alanine racemase family. Requires pyridoxal 5'-phosphate as cofactor.

It carries out the reaction L-alanine = D-alanine. Its function is as follows. Isomerizes L-alanine to D-alanine which is then oxidized to pyruvate by DadA. This chain is Alanine racemase, catabolic (dadX), found in Escherichia coli O157:H7.